A 614-amino-acid polypeptide reads, in one-letter code: Translation initiation factor IF-2 (614 aa).

One can recognise a tr-type G domain in the interval 115–283; that stretch reads ARAPIVTIMG…ILLIAELNDY (169 aa). A G1 region spans residues 124–131; sequence GHVDHGKT. Residue 124 to 131 participates in GTP binding; it reads GHVDHGKT. A G2 region spans residues 149 to 153; the sequence is GITQH. A G3 region spans residues 170–173; the sequence is DTPG. GTP contacts are provided by residues 170-174 and 224-227; these read DTPGH and NKMD. The interval 224 to 227 is G4; it reads NKMD. The interval 260–262 is G5; it reads SAL.

This sequence belongs to the TRAFAC class translation factor GTPase superfamily. Classic translation factor GTPase family. IF-2 subfamily.

It is found in the cytoplasm. In terms of biological role, one of the essential components for the initiation of protein synthesis. Protects formylmethionyl-tRNA from spontaneous hydrolysis and promotes its binding to the 30S ribosomal subunits. Also involved in the hydrolysis of GTP during the formation of the 70S ribosomal complex. In Ureaplasma urealyticum serovar 10 (strain ATCC 33699 / Western), this protein is Translation initiation factor IF-2.